The following is a 252-amino-acid chain: Isoprenyl transferase (252 aa).

Asp-32 is an active-site residue. A Mg(2+)-binding site is contributed by Asp-32. Substrate contacts are provided by residues 33 to 36 (GNGR), Trp-37, Arg-45, His-49, and 77 to 79 (STE). Asn-80 serves as the catalytic Proton acceptor. Residues Trp-81, Arg-83, Arg-200, and 206 to 208 (RLS) contribute to the substrate site. Glu-219 serves as a coordination point for Mg(2+).

This sequence belongs to the UPP synthase family. In terms of assembly, homodimer. Mg(2+) is required as a cofactor.

Catalyzes the condensation of isopentenyl diphosphate (IPP) with allylic pyrophosphates generating different type of terpenoids. In Listeria monocytogenes serotype 4b (strain F2365), this protein is Isoprenyl transferase.